We begin with the raw amino-acid sequence, 679 residues long: MPKYHLKAPYSPKGDQPTAIARLVEGVNQGQRYQTLLGATGTGKTFTIANLIAQTGRPALVLAHNKTLAAQLCNEFREFFPDNSVEYFISYYDYYQPEAYVPVSDTYIAKTASINEEIDMLRHSATRSLFERNDVIVVASISCIYGLGIPSEYLKAAVKFKVGETLNLRSSLRELVDNQYSRNDFDITRGRFRVRGDVLEIGPAYEDRLVRIELFGDEVEAIRYLDPTTGEILQSLEAINIYPAKHFVTPKERLNVAVQAIRDELRERLQVLNEQGKLLEAQRLEQRTAYDLEMLREVGYCNGVENYARHLAGRSAGTPPECLIDYFPDDWLLVVDESHVTCSQLKAMYNGDQARKKVLIEHGFRLPSAADNRPLKSEEFWRKARQTVFVSATPGDWELTQSDGQLAEQVIRPTGVLDPLVEVRPTQGQVDDLLAEIRIRAKKQERVLITTLTKRMAEDLTDYLAENDVRVRYLHSEIHSIERIEIIQDLRLGEYDVLVGVNLLREGLDLPEVSLVVILDADKEGFLRAERSLIQTIGRAARHVDGMALLYADNLTDSMARAISETERRREIQKAYNELNGIVPRPAGKRASNSILSFLELSRRLQTDGKDADLVQITGRAVDALDSDQDSGLALDALPELIDQLETKMKEAAKNLNFEEAASLRDRIKKFRQKLIRNT.

A Helicase ATP-binding domain is found at 25-190; sequence EGVNQGQRYQ…SRNDFDITRG (166 aa). 38 to 45 serves as a coordination point for ATP; it reads GATGTGKT. Residues 91–114 carry the Beta-hairpin motif; that stretch reads YYDYYQPEAYVPVSDTYIAKTASI. Residues 429 to 591 form the Helicase C-terminal domain; it reads QVDDLLAEIR…IVPRPAGKRA (163 aa). In terms of domain architecture, UVR spans 639-674; that stretch reads PELIDQLETKMKEAAKNLNFEEAASLRDRIKKFRQK.

Belongs to the UvrB family. Forms a heterotetramer with UvrA during the search for lesions. Interacts with UvrC in an incision complex.

It is found in the cytoplasm. Functionally, the UvrABC repair system catalyzes the recognition and processing of DNA lesions. A damage recognition complex composed of 2 UvrA and 2 UvrB subunits scans DNA for abnormalities. Upon binding of the UvrA(2)B(2) complex to a putative damaged site, the DNA wraps around one UvrB monomer. DNA wrap is dependent on ATP binding by UvrB and probably causes local melting of the DNA helix, facilitating insertion of UvrB beta-hairpin between the DNA strands. Then UvrB probes one DNA strand for the presence of a lesion. If a lesion is found the UvrA subunits dissociate and the UvrB-DNA preincision complex is formed. This complex is subsequently bound by UvrC and the second UvrB is released. If no lesion is found, the DNA wraps around the other UvrB subunit that will check the other stand for damage. In Prochlorococcus marinus (strain MIT 9303), this protein is UvrABC system protein B.